The sequence spans 444 residues: Protein-serine O-palmitoleoyltransferase porcupine (444 aa).

Transmembrane regions (helical) follow at residues 29–49 (NGTL…FLVW), 81–101 (VMIF…KLNG), 128–150 (FLTL…FAIV), 163–183 (TLYL…YVTF), 201–221 (LGVF…AIIS), 249–269 (YFIC…IVVA), 304–324 (FFQS…LLHA), 326–346 (DYQM…ETVF), 383–403 (VLII…FTGM), and 420–440 (WTIW…FLAL). Residue histidine 323 is part of the active site.

This sequence belongs to the membrane-bound acyltransferase family. Porcupine subfamily.

The protein localises to the membrane. It catalyses the reaction [Wnt protein]-L-serine + (9Z)-hexadecenoyl-CoA = [Wnt protein]-O-(9Z)-hexadecenoyl-L-serine + CoA. Key regulator of the Wnt signaling pathway that mediates lipid modification of Wnt proteins. Acts as a protein-serine O-palmitoleoyltransferase that catalyzes the attachment of palmitoleate, a 16-carbon monounsaturated fatty acid (C16:1(9Z)), to Wnt proteins. Serine palmitoleoylation of WNT proteins is required for efficient binding to frizzled receptors. Has a role in cell specification, specifically in blastomere signaling. Involved in cytosketetal polarity. Required for the orientation of mitotic spindle axis. This chain is Protein-serine O-palmitoleoyltransferase porcupine, found in Caenorhabditis briggsae.